Reading from the N-terminus, the 199-residue chain is Peroxynitrite isomerase (199 aa).

Residues 20–26 (GVWEGTG) carry the GXWXGXG motif. H190 lines the heme b pocket.

Belongs to the nitrobindin family. In terms of assembly, homodimer. Heme b is required as a cofactor.

The catalysed reaction is peroxynitrite = nitrate. It functions in the pathway nitrogen metabolism. Heme-binding protein able to scavenge peroxynitrite and to protect free L-tyrosine against peroxynitrite-mediated nitration, by acting as a peroxynitrite isomerase that converts peroxynitrite to nitrate. Therefore, this protein likely plays a role in peroxynitrite sensing and in the detoxification of reactive nitrogen and oxygen species (RNS and ROS, respectively). Is able to bind nitric oxide (NO) in vitro, but may act as a sensor of peroxynitrite levels in vivo. This chain is Peroxynitrite isomerase, found in Clavibacter michiganensis subsp. michiganensis (strain NCPPB 382).